The following is a 139-amino-acid chain: Protein PsiE homolog (139 aa).

The next 4 helical transmembrane spans lie at 20–40 (IVLC…LVKI), 60–80 (AEQA…VQYF), 85–105 (HFPL…LIIV), and 111–131 (VDTI…CLVL).

It belongs to the PsiE family.

It is found in the cell inner membrane. This is Protein PsiE homolog from Haemophilus influenzae (strain 86-028NP).